The sequence spans 249 residues: DNA polymerase sliding clamp 3 (249 aa).

Belongs to the PCNA family. As to quaternary structure, homotrimer. The subunits circularize to form a toroid; DNA passes through its center. Replication factor C (RFC) is required to load the toroid on the DNA.

Sliding clamp subunit that acts as a moving platform for DNA processing. Responsible for tethering the catalytic subunit of DNA polymerase and other proteins to DNA during high-speed replication. The polypeptide is DNA polymerase sliding clamp 3 (Aeropyrum pernix (strain ATCC 700893 / DSM 11879 / JCM 9820 / NBRC 100138 / K1)).